A 585-amino-acid chain; its full sequence is Arginine--tRNA ligase (585 aa).

A 'HIGH' region motif is present at residues 127–137 (PNTNKPLHVGH).

It belongs to the class-I aminoacyl-tRNA synthetase family. In terms of assembly, monomer.

The protein localises to the cytoplasm. The catalysed reaction is tRNA(Arg) + L-arginine + ATP = L-arginyl-tRNA(Arg) + AMP + diphosphate. In Borrelia duttonii (strain Ly), this protein is Arginine--tRNA ligase.